The primary structure comprises 115 residues: Pycsar effector protein TpPycTM (115 aa).

Helical transmembrane passes span 44–64 and 74–94; these read IGNL…YATN and VWNI…VILV.

The protein resides in the cell inner membrane. In terms of biological role, pycsar (pyrimidine cyclase system for antiphage resistance) provides immunity against bacteriophage. The pyrimidine cyclase (PycC) synthesizes cyclic nucleotides in response to infection; these serve as specific second messenger signals. The signals activate the adjacent effector, leading to bacterial cell death and abortive phage infection. A clade C Pycsar system. Functionally, the effector gene of a two-gene Pycsar system. Expression of this and adjacent uridylate cyclase TpPycC (AC A0A1T4LJ54) probably confers resistance to bacteriophage. The genes are probably only expressed in response to bacteriophage infection. Probably only responds to cUMP (produced by its cognate NTP cyclase), acts by impairing membrane integrity. The polypeptide is Pycsar effector protein TpPycTM (Treponema porcinum).